The primary structure comprises 564 residues: MFS-type transporter kojT (564 aa).

Asparagine 113 is a glycosylation site (N-linked (GlcNAc...) asparagine). 12 helical membrane passes run 120 to 140 (WATL…SSID), 159 to 179 (SLAT…AAPF), 187 to 207 (PVYI…GLAP), 217 to 237 (FLAG…MADI), 249 to 269 (VCCT…AFIG), 278 to 298 (WTEW…FLFV), 353 to 373 (IMVA…FGFL), 389 to 409 (GSVG…FAMV), 437 to 457 (LWFA…MGWT), 462 to 482 (ISYW…QGIF), 500 to 520 (ALVS…IVSI), and 530 to 550 (WSLT…YIFY).

This sequence belongs to the major facilitator superfamily.

The protein localises to the cell membrane. In terms of biological role, MFS-type transporter; part of the gene cluster that mediates the biosynthesis of 5-hydroxy-2-hydroxymethyl-1,4-pyrone, also know as kojic acid, a by-product in the fermentation process of malting rice that acts as a chelation agent. Involved in the seretion of kojic acid. The polypeptide is MFS-type transporter kojT (Aspergillus flavus (strain ATCC 200026 / FGSC A1120 / IAM 13836 / NRRL 3357 / JCM 12722 / SRRC 167)).